Reading from the N-terminus, the 115-residue chain is Evasin P1183 (115 aa).

The first 25 residues, 1 to 25, serve as a signal peptide directing secretion; it reads MTRNWSFRVIFVSAMWCALLKFATL. Intrachain disulfides connect cysteine 38-cysteine 58, cysteine 54-cysteine 94, cysteine 70-cysteine 99, and cysteine 89-cysteine 108. N-linked (GlcNAc...) asparagine glycosylation is found at asparagine 45, asparagine 72, and asparagine 103.

It localises to the secreted. In terms of biological role, salivary chemokine-binding protein which binds to host chemokine CCL2. The chain is Evasin P1183 from Amblyomma triste (Neotropical tick).